A 241-amino-acid polypeptide reads, in one-letter code: Uridylate kinase (241 aa).

ATP is bound at residue 15 to 18 (KMSG). G57 lines the UMP pocket. 2 residues coordinate ATP: G58 and R62. Residues D77 and 138–145 (TGNPFFTT) contribute to the UMP site. ATP contacts are provided by T165, Y171, and D174.

Belongs to the UMP kinase family. In terms of assembly, homohexamer.

The protein localises to the cytoplasm. It carries out the reaction UMP + ATP = UDP + ADP. The protein operates within pyrimidine metabolism; CTP biosynthesis via de novo pathway; UDP from UMP (UMPK route): step 1/1. With respect to regulation, inhibited by UTP. Catalyzes the reversible phosphorylation of UMP to UDP. This Dichelobacter nodosus (strain VCS1703A) protein is Uridylate kinase.